A 243-amino-acid polypeptide reads, in one-letter code: Leucinostatins biosynthesis cluster protein S (243 aa).

Functionally, part of the gene cluster that mediates the biosynthesis of the lipopeptide antibiotics leucinostatins that show extensive biological activities, including antimalarial, antiviral, antibacterial, antifungal, and antitumor activities, as well as phytotoxic. The function of lcsS within the leucinostatins biosynthesis has not been identified yet. This is Leucinostatins biosynthesis cluster protein S from Purpureocillium lilacinum (Paecilomyces lilacinus).